Reading from the N-terminus, the 134-residue chain is Small ribosomal subunit protein eS24A (134 aa).

S2 carries the post-translational modification N-acetylserine. The disordered stretch occupies residues I100–D134. Composition is skewed to basic residues over residues R105–K117 and R124–D134.

The protein belongs to the eukaryotic ribosomal protein eS24 family. Component of the small ribosomal subunit (SSU). Mature yeast ribosomes consist of a small (40S) and a large (60S) subunit. The 40S small subunit contains 1 molecule of ribosomal RNA (18S rRNA) and at least 33 different proteins. The large 60S subunit contains 3 rRNA molecules (25S, 5.8S and 5S rRNA) and at least 46 different proteins.

It localises to the cytoplasm. Its function is as follows. Component of the ribosome, a large ribonucleoprotein complex responsible for the synthesis of proteins in the cell. The small ribosomal subunit (SSU) binds messenger RNAs (mRNAs) and translates the encoded message by selecting cognate aminoacyl-transfer RNA (tRNA) molecules. The large subunit (LSU) contains the ribosomal catalytic site termed the peptidyl transferase center (PTC), which catalyzes the formation of peptide bonds, thereby polymerizing the amino acids delivered by tRNAs into a polypeptide chain. The nascent polypeptides leave the ribosome through a tunnel in the LSU and interact with protein factors that function in enzymatic processing, targeting, and the membrane insertion of nascent chains at the exit of the ribosomal tunnel. In Schizosaccharomyces pombe (strain 972 / ATCC 24843) (Fission yeast), this protein is Small ribosomal subunit protein eS24A (rps2401).